A 457-amino-acid chain; its full sequence is Toxin and drug export protein A (457 aa).

Positions 1–23 (MFTIKKLTLTIVVATTLTGCANI) are cleaved as a signal peptide.

It belongs to the outer membrane factor (OMF) (TC 1.B.17) family. As to quaternary structure, homotrimer. Probably part of a complex composed of LtxB, LtxD and TdeA, which forms a single transport channel across the two membranes.

It is found in the cell outer membrane. Functionally, required for secretion of the LtxA leukotoxin and resistance to various antimicrobial compounds. This Aggregatibacter actinomycetemcomitans (Actinobacillus actinomycetemcomitans) protein is Toxin and drug export protein A.